A 337-amino-acid chain; its full sequence is Adenosine deaminase (337 aa).

The Zn(2+) site is built by H15 and H17. Substrate contacts are provided by H17, D19, and G172. H199 lines the Zn(2+) pocket. E202 (proton donor) is an active-site residue. D279 contributes to the Zn(2+) binding site.

This sequence belongs to the metallo-dependent hydrolases superfamily. Adenosine and AMP deaminases family. Adenosine deaminase subfamily. It depends on Zn(2+) as a cofactor.

It carries out the reaction adenosine + H2O + H(+) = inosine + NH4(+). It catalyses the reaction 2'-deoxyadenosine + H2O + H(+) = 2'-deoxyinosine + NH4(+). Its function is as follows. Catalyzes the hydrolytic deamination of adenosine and 2-deoxyadenosine. This Enterococcus faecalis (strain ATCC 700802 / V583) protein is Adenosine deaminase.